The sequence spans 193 residues: Phosphoheptose isomerase (193 aa).

The SIS domain maps to 37–193; the sequence is LANAFKAGGK…QLIEKEMADQ (157 aa). 52-54 provides a ligand contact to substrate; the sequence is NGG. H61 and E65 together coordinate Zn(2+). Residues E65, 93–94, 119–121, S124, and Q172 each bind substrate; these read ND and STS. Zn(2+)-binding residues include Q172 and H180.

This sequence belongs to the SIS family. GmhA subfamily. Homotetramer. Requires Zn(2+) as cofactor.

It is found in the cytoplasm. It catalyses the reaction 2 D-sedoheptulose 7-phosphate = D-glycero-alpha-D-manno-heptose 7-phosphate + D-glycero-beta-D-manno-heptose 7-phosphate. It functions in the pathway carbohydrate biosynthesis; D-glycero-D-manno-heptose 7-phosphate biosynthesis; D-glycero-alpha-D-manno-heptose 7-phosphate and D-glycero-beta-D-manno-heptose 7-phosphate from sedoheptulose 7-phosphate: step 1/1. Functionally, catalyzes the isomerization of sedoheptulose 7-phosphate in D-glycero-D-manno-heptose 7-phosphate. The protein is Phosphoheptose isomerase of Pectobacterium atrosepticum (strain SCRI 1043 / ATCC BAA-672) (Erwinia carotovora subsp. atroseptica).